A 562-amino-acid polypeptide reads, in one-letter code: Potassium-transporting ATPase potassium-binding subunit (562 aa).

12 helical membrane passes run 6–26, 62–82, 132–152, 175–195, 253–273, 283–303, 327–347, 356–376, 379–399, 416–436, 483–503, and 526–546; these read FLLIASFMLVLFVLSRPLGGF, YALAILCFNLLGIVLLFVLLM, GLTVQNFLSAATGIAVAFALI, LYVLLPIALIIALIFVSQGVL, FVQMLAIFLIPCALCFAFGQV, LIWAMSLIFIVAVVVVMYAEL, FGILATSLYAVVTTAASCGAV, ALGGMIPLWLMQIGEVVFGGV, GLYGMLLFVLLTVFIAGLMIG, MTALAILVTPTIVLLGTALAL, LLLAAAMFIGRFGVILPVLAI, and LFIGLLIGTVLLVGALTFIPA.

This sequence belongs to the KdpA family. The system is composed of three essential subunits: KdpA, KdpB and KdpC.

The protein resides in the cell inner membrane. Functionally, part of the high-affinity ATP-driven potassium transport (or Kdp) system, which catalyzes the hydrolysis of ATP coupled with the electrogenic transport of potassium into the cytoplasm. This subunit binds the periplasmic potassium ions and delivers the ions to the membrane domain of KdpB through an intramembrane tunnel. This chain is Potassium-transporting ATPase potassium-binding subunit, found in Yersinia pseudotuberculosis serotype I (strain IP32953).